Reading from the N-terminus, the 146-residue chain is MKLHELKPAEGSRKVRNRVGRGTSSGNGKTSGRGQKGQKARSGVGLRPGFEGGQTPLFRRLPKRGFTNINAKEYTLVNLEQLNVFEDGTEVTPVVLKEAGIIRAEKSGVKVLGNGELTKKLTVKAAKFSKSAEAAITAKGGSIEVI.

A compositionally biased stretch (basic and acidic residues) spans 1–13 (MKLHELKPAEGSR). Residues 1–57 (MKLHELKPAEGSRKVRNRVGRGTSSGNGKTSGRGQKGQKARSGVGLRPGFEGGQTPL) are disordered. The segment covering 23-35 (TSSGNGKTSGRGQ) has biased composition (gly residues).

Belongs to the universal ribosomal protein uL15 family. Part of the 50S ribosomal subunit.

Binds to the 23S rRNA. This Streptococcus thermophilus (strain CNRZ 1066) protein is Large ribosomal subunit protein uL15.